The sequence spans 179 residues: Segregation and condensation protein B (179 aa).

Belongs to the ScpB family. As to quaternary structure, homodimer. Homodimerization may be required to stabilize the binding of ScpA to the Smc head domains. Component of a cohesin-like complex composed of ScpA, ScpB and the Smc homodimer, in which ScpA and ScpB bind to the head domain of Smc. The presence of the three proteins is required for the association of the complex with DNA.

It localises to the cytoplasm. In terms of biological role, participates in chromosomal partition during cell division. May act via the formation of a condensin-like complex containing Smc and ScpA that pull DNA away from mid-cell into both cell halves. In Streptococcus equi subsp. zooepidemicus (strain H70), this protein is Segregation and condensation protein B.